A 286-amino-acid chain; its full sequence is MNVVKNIADLRAAVARARGEGKRIGFVPTMGNLHAGHIALVKKAGQRADFVVASIFVNPLQFGPNEDLDNYPRTLAADQEKLFDAGCHLLFAPSVEEMYPHGQANQTIVRVPGVSEGLCGGSRPGHFDGVSTVVSKLFNMVLPDLAVFGQKDFQQLAVIRTMVRDLNMPVQILSEPTVRADDGLALSSRNGYLSADERATAPVLYRTLNQLRDALQGGRRDLPALIDEGLEALRNAGLRPDYLDIRNAIDLQPVTDASSELVILAAAYLGKTRLIDNLLVDLRTSA.

30-37 (MGNLHAGH) provides a ligand contact to ATP. The active-site Proton donor is histidine 37. Glutamine 61 is a (R)-pantoate binding site. Glutamine 61 contacts beta-alanine. 149-152 (GQKD) contacts ATP. Glutamine 155 serves as a coordination point for (R)-pantoate. Residues valine 178 and 186–189 (LSSR) each bind ATP.

This sequence belongs to the pantothenate synthetase family. As to quaternary structure, homodimer.

The protein resides in the cytoplasm. The enzyme catalyses (R)-pantoate + beta-alanine + ATP = (R)-pantothenate + AMP + diphosphate + H(+). The protein operates within cofactor biosynthesis; (R)-pantothenate biosynthesis; (R)-pantothenate from (R)-pantoate and beta-alanine: step 1/1. Catalyzes the condensation of pantoate with beta-alanine in an ATP-dependent reaction via a pantoyl-adenylate intermediate. This is Pantothenate synthetase from Stutzerimonas stutzeri (strain A1501) (Pseudomonas stutzeri).